The following is a 952-amino-acid chain: Glycine dehydrogenase (decarboxylating) (952 aa).

An N6-(pyridoxal phosphate)lysine modification is found at Lys703.

It belongs to the GcvP family. The glycine cleavage system is composed of four proteins: P, T, L and H. It depends on pyridoxal 5'-phosphate as a cofactor.

It carries out the reaction N(6)-[(R)-lipoyl]-L-lysyl-[glycine-cleavage complex H protein] + glycine + H(+) = N(6)-[(R)-S(8)-aminomethyldihydrolipoyl]-L-lysyl-[glycine-cleavage complex H protein] + CO2. Its function is as follows. The glycine cleavage system catalyzes the degradation of glycine. The P protein binds the alpha-amino group of glycine through its pyridoxal phosphate cofactor; CO(2) is released and the remaining methylamine moiety is then transferred to the lipoamide cofactor of the H protein. The chain is Glycine dehydrogenase (decarboxylating) from Mycolicibacterium gilvum (strain PYR-GCK) (Mycobacterium gilvum (strain PYR-GCK)).